Reading from the N-terminus, the 443-residue chain is Phosphoglucosamine mutase (443 aa).

Catalysis depends on Ser102, which acts as the Phosphoserine intermediate. Ser102, Asp241, Asp243, and Asp245 together coordinate Mg(2+). Ser102 carries the post-translational modification Phosphoserine.

This sequence belongs to the phosphohexose mutase family. Requires Mg(2+) as cofactor. Activated by phosphorylation.

It catalyses the reaction alpha-D-glucosamine 1-phosphate = D-glucosamine 6-phosphate. In terms of biological role, catalyzes the conversion of glucosamine-6-phosphate to glucosamine-1-phosphate. This Acinetobacter baylyi (strain ATCC 33305 / BD413 / ADP1) protein is Phosphoglucosamine mutase.